We begin with the raw amino-acid sequence, 291 residues long: Diaminopimelate epimerase (291 aa).

Residues Asn17, Gln50, and Asn70 each coordinate substrate. The active-site Proton donor is the Cys79. Substrate contacts are provided by residues 80 to 81, Asn167, Asn200, and 218 to 219; these read GN and ER. Residue Cys227 is the Proton acceptor of the active site. 228–229 serves as a coordination point for substrate; sequence GS.

This sequence belongs to the diaminopimelate epimerase family. In terms of assembly, homodimer.

Its subcellular location is the cytoplasm. It catalyses the reaction (2S,6S)-2,6-diaminopimelate = meso-2,6-diaminopimelate. Its pathway is amino-acid biosynthesis; L-lysine biosynthesis via DAP pathway; DL-2,6-diaminopimelate from LL-2,6-diaminopimelate: step 1/1. Catalyzes the stereoinversion of LL-2,6-diaminopimelate (L,L-DAP) to meso-diaminopimelate (meso-DAP), a precursor of L-lysine and an essential component of the bacterial peptidoglycan. The sequence is that of Diaminopimelate epimerase from Bradyrhizobium diazoefficiens (strain JCM 10833 / BCRC 13528 / IAM 13628 / NBRC 14792 / USDA 110).